Consider the following 117-residue polypeptide: Photosystem II reaction center Psb28 protein (117 aa).

It belongs to the Psb28 family. As to quaternary structure, part of the photosystem II complex.

Its subcellular location is the cellular thylakoid membrane. The polypeptide is Photosystem II reaction center Psb28 protein (Prochlorococcus marinus subsp. pastoris (strain CCMP1986 / NIES-2087 / MED4)).